A 383-amino-acid polypeptide reads, in one-letter code: Subtelomeric hrmA-associated cluster protein AFUB_078970 (383 aa).

Disordered stretches follow at residues Asn118 to Asp145 and Gln249 to Pro318. Over residues Pro119–Ser134 the composition is skewed to low complexity. In terms of domain architecture, Myb-like spans Pro318–Leu364.

Myb-like domain-containing protein; part of the subtelomeric hrmA-associated cluster (HAC) containing genes that alter the hyphal surface (such as reduced total chitin or increased beta-glucan exposure) and perturb inter-hyphal interactions within the developing biofilms, resulting in a loss of vertically aligned polarized growing filaments. Consequently, this hypoxia-typic morphotype (called H-MORPH) with altered biofilm architecture leads to increased hypoxia fitness, increased host inflammation, rapid disease progression, and mortality in a murine model of invasive aspergillosis. The polypeptide is Subtelomeric hrmA-associated cluster protein AFUB_078970 (Aspergillus fumigatus (strain CBS 144.89 / FGSC A1163 / CEA10) (Neosartorya fumigata)).